The sequence spans 773 residues: Disintegrin and metalloproteinase domain-containing protein 11 (773 aa).

An N-terminal signal peptide occupies residues 1–24 (MRRLRRWAIAALLLLPLLPPPGLG). The propeptide occupies 25-229 (ALGPRGALHW…PNWPKLRRKR (205 aa)). The tract at residues 36-82 (SSAHVGSPESPEGSEVTEPSRLVRQSSGGEVRKPQLDTRVRQDPPRG) is disordered. Residues 65–79 (EVRKPQLDTRVRQDP) are compositionally biased toward basic and acidic residues. Residues asparagine 100 and asparagine 167 are each glycosylated (N-linked (GlcNAc...) asparagine). The Extracellular portion of the chain corresponds to 230-738 (QVRRGHPTVH…ERYKGPSGTN (509 aa)). Residues 243-442 (KYVELIVIND…GGGSCLFNKP (200 aa)) enclose the Peptidase M12B domain. Positions 336–773 (GRTFQSTSSG…NIRRGRSGGA (438 aa)) are required for localization to cerebellar cortex basket cell terminals. Also required for localization of KCNA1, KCNA2, DLG4 and ADAM22 to cerebellar cortex basket cell terminal perisomatic axons and pinceaux. Disulfide bonds link cysteine 353–cysteine 437, cysteine 396–cysteine 421, cysteine 398–cysteine 405, and cysteine 507–cysteine 527. Residues 448 to 535 (PPECGNGFVE…QCPPNLHKLD (88 aa)) enclose the Disintegrin domain. Residues asparagine 609 and asparagine 677 are each glycosylated (N-linked (GlcNAc...) asparagine). 3 cysteine pairs are disulfide-bonded: cysteine 681/cysteine 696, cysteine 690/cysteine 702, and cysteine 704/cysteine 713. One can recognise an EGF-like domain in the interval 681–713 (CPGSGERRICSHHGVCSNEGKCICQPDWTGKDC). Residues 739–759 (IIIGSIAGAVLVAAIVLGGTG) form a helical membrane-spanning segment. Residues 760 to 773 (WGFKNIRRGRSGGA) are Cytoplasmic-facing.

As to quaternary structure, interacts with LGI1 and LGI4. Interacts with KCNA1/KV1.1, KCNA2/KV1.2, DLG4/PSD-95 and ADAM22. The precursor is cleaved by a furin endopeptidase. As to expression, abundantly expressed in cerebellar cortex basket cell terminals and pinceaux, weakly expressed in Purkinje cells (at protein level). Weakly expressed in the heart. Abundantly in expressed in neurons throughout the central nervous system including the telencephalon, diencephalic and brainstem nuclei, cerebellum and spinal cord. Expressed in the peripheral nervous system trigeminal and dorsal root ganglia. Expressed in the ganglion and bipolar cells of the retinae and weakly in the cornea of the eyes. Expressed in the hepatocytes of the parenchyma and hepatic lobules of the liver. Expressed in distinct focal areas in the juxtamedullary cortex of the kidney. Expressed in spermatocytes in the seminiferous tubules of the testes. Expressed in the stratum spinosum of the stratified squamous epithelia of the tongue and esophagus.

It localises to the presynaptic cell membrane. The protein resides in the perikaryon. Its subcellular location is the cell projection. The protein localises to the axon. Functionally, probable ligand for integrin in the brain. This is a non catalytic metalloprotease-like protein. Required for localization of the potassium channel subunit proteins KCNA1/KV1.1 and KCNA2/KV1.2 at cerebellar cortex basket cell distal terminals, is thereby involved in ephaptic inhibitory synchronization of Purkinje cell firing and response to stress. Plays a role in spatial learning and motor coordination. Involved in the nociceptive pain response to chemical-derived stimulation. The polypeptide is Disintegrin and metalloproteinase domain-containing protein 11 (Adam11) (Mus musculus (Mouse)).